The following is a 244-amino-acid chain: Small ribosomal subunit protein uS2 (244 aa).

The protein belongs to the universal ribosomal protein uS2 family.

The polypeptide is Small ribosomal subunit protein uS2 (Hydrogenovibrio crunogenus (strain DSM 25203 / XCL-2) (Thiomicrospira crunogena)).